The following is a 304-amino-acid chain: Putative S-adenosyl-L-methionine-dependent methyltransferase Mmcs_1043 (304 aa).

S-adenosyl-L-methionine-binding positions include aspartate 130 and 159 to 160 (DL).

It belongs to the UPF0677 family.

Its function is as follows. Exhibits S-adenosyl-L-methionine-dependent methyltransferase activity. The polypeptide is Putative S-adenosyl-L-methionine-dependent methyltransferase Mmcs_1043 (Mycobacterium sp. (strain MCS)).